We begin with the raw amino-acid sequence, 420 residues long: Type II methyltransferase M.NmeDI (420 aa).

Residues 1-23 (MMSLKIQPAVPKKSDKPSATNRD) are disordered. Residues 56 to 411 (TLIFSFFSGA…MTLKSYLENH (356 aa)) form the SAM-dependent MTase C5-type domain. Cys-148 is an active-site residue.

It belongs to the class I-like SAM-binding methyltransferase superfamily. C5-methyltransferase family.

The enzyme catalyses a 2'-deoxycytidine in DNA + S-adenosyl-L-methionine = a 5-methyl-2'-deoxycytidine in DNA + S-adenosyl-L-homocysteine + H(+). Its function is as follows. A methylase that recognizes the double-stranded sequence 5'-RCCGGB-3', methylates C-2 on both strands, and protects the DNA from cleavage by the NmeDI endonuclease. This is Type II methyltransferase M.NmeDI (nmeDIMP) from Neisseria meningitidis serogroup C.